A 347-amino-acid chain; its full sequence is Dolichyl-diphosphooligosaccharide--protein glycosyltransferase subunit TUSC3 (347 aa).

Residues 1-41 (MGARGAPSRRRQAGRRPRYLPTGSFPFLLLLLLLCIQLGGG) form the signal peptide. Residues 42-196 (QKKKENLLAE…DVHIRVFRPP (155 aa)) lie on the Lumenal side of the membrane. The Thioredoxin domain occupies 59 to 187 (WSSRRSVFRM…LAKWIADRTD (129 aa)). Asparagine 83 carries an N-linked (GlcNAc...) asparagine glycan. A disulfide bridge links cysteine 99 with cysteine 102. Residues 197 to 217 (NYSGTIALALLVSLVGGLLYL) form a helical membrane-spanning segment. Over 218-221 (RRNN) the chain is Cytoplasmic. A helical transmembrane segment spans residues 222–242 (LEFIYNKTGWAMVSLCIVFAM). Residues 243–276 (TSGQMWNHIRGPPYAHKNPHNGQVSYIHGSSQVQ) are Lumenal-facing. The helical transmembrane segment at 277–297 (FVAESHIILVLNAAITMGMDL) threads the bilayer. Residues 298–312 (LNEAATSKGDVGKRR) are Cytoplasmic-facing. Residues 313–333 (IICLVGLGLVVFFFSFLLSIF) traverse the membrane as a helical segment. Over 334-347 (RSKYHGYPYSFLIK) the chain is Lumenal.

It belongs to the OST3/OST6 family. In terms of assembly, accessory component of the STT3B-containing form of the oligosaccharyltransferase (OST) complex. OST exists in two different complex forms which contain common core subunits RPN1, RPN2, OST48, OST4, DAD1 and TMEM258, either STT3A or STT3B as catalytic subunits, and form-specific accessory subunits. OST can form stable complexes with the Sec61 complex or with both the Sec61 and TRAP complexes. The association of TUSC3 or MAGT1 with the STT3B-containing complex seems to be mutually exclusvice.

It is found in the endoplasmic reticulum membrane. It participates in protein modification; protein glycosylation. Acts as accessory component of the N-oligosaccharyl transferase (OST) complex which catalyzes the transfer of a high mannose oligosaccharide from a lipid-linked oligosaccharide donor to an asparagine residue within an Asn-X-Ser/Thr consensus motif in nascent polypeptide chains. Involved in N-glycosylation of STT3B-dependent substrates. Specifically required for the glycosylation of a subset of acceptor sites that are near cysteine residues; in this function seems to act redundantly with MAGT1. In its oxidized form proposed to form transient mixed disulfides with a glycoprotein substrate to facilitate access of STT3B to the unmodified acceptor site. Also has oxidoreductase-independent functions in the STT3B-containing OST complex possibly involving substrate recognition. Could indirectly play a role in Mg(2+) transport. In Bos taurus (Bovine), this protein is Dolichyl-diphosphooligosaccharide--protein glycosyltransferase subunit TUSC3 (TUSC3).